The following is a 153-amino-acid chain: SKP1-like protein 5 (153 aa).

The segment at 90–153 (MMAANYLNIQ…IREENQWAFQ (64 aa)) is interaction with the F-box domain of F-box proteins.

The protein belongs to the SKP1 family. Part of a SCF (SKP1-cullin-F-box) protein ligase complex. Interacts with PP2A13. Restricted to inflorescences, especially in the inflorescence meristem (IM).

Its subcellular location is the nucleus. It participates in protein modification; protein ubiquitination. In terms of biological role, involved in ubiquitination and subsequent proteasomal degradation of target proteins. Together with CUL1, RBX1 and a F-box protein, it forms a SCF E3 ubiquitin ligase complex. The functional specificity of this complex depends on the type of F-box protein. In the SCF complex, it serves as an adapter that links the F-box protein to CUL1. This is SKP1-like protein 5 (ASK5) from Arabidopsis thaliana (Mouse-ear cress).